A 147-amino-acid chain; its full sequence is Organic hydroperoxide resistance transcriptional regulator (147 aa).

Residues 11 to 141 form the HTH marR-type domain; sequence ENQLCFLLYA…LKSALYTLLE (131 aa). Residue cysteine 15 is modified to Cysteine sulfenic acid (-SOH); alternate. Residue cysteine 15 is modified to S-bacillithiol cysteine disulfide; alternate. Cysteine 15 carries the post-translational modification S-cysteinyl cysteine; alternate. A cross-link (n,N-(cysteine-1,S-diyl)phenylalanine (Cys-Phe); alternate) is located at residues 15-16; it reads CF. Positions 57–80 form a DNA-binding region, H-T-H motif; sequence VKKMGEQLYLDSGTLTPMLKRMEQ.

In terms of assembly, homodimer. Post-translationally, cys-15 is oxidized by organic peroxides to cysteine sulfenic acid (Cys-SOH). This can react with the alpha-amido of the following residue to form the sulfenamide cross-link. Oxidation or cross-linking results in the loss of DNA-binding activity and the inactivation of repressor function. Both the cysteine sulfenic acid and the sulfenamide cross-link can react with free cysteine or bacillithiol (BSH) to form mixed disulfides. Further reduction of OhrR by free sulfhydryl compounds restores repressor activity.

Its subcellular location is the cytoplasm. Inactivated by oxidation of Cys-15 to a sulfenic acid. Functionally, organic peroxide sensor. Represses the expression of the peroxide-inducible gene ohrA by cooperative binding to two inverted repeat elements. The polypeptide is Organic hydroperoxide resistance transcriptional regulator (ohrR) (Bacillus subtilis (strain 168)).